We begin with the raw amino-acid sequence, 350 residues long: Autophagy-related protein 3 (350 aa).

Residues 85–166 (NFAGDAGLEE…EEDDEAIIRD (82 aa)) form a flexible region region. The tract at residues 97-171 (VDDGDEFKGS…AIIRDTDASG (75 aa)) is disordered. Residues 102–113 (EFKGSKGDDDGW) show a composition bias toward basic and acidic residues. Residues 146-161 (DDDDDIPDMEDEEDDE) are compositionally biased toward acidic residues. The Glycyl thioester intermediate role is filled by C244. Positions 248 to 326 (PVMKTLLDRA…DQEVAIRVDQ (79 aa)) are handle region. Residues K262 and K267 each carry the N6-acetyllysine modification.

The protein belongs to the ATG3 family. As to quaternary structure, monomer. Interacts with ATG8 through an intermediate thioester bond through the C-terminal Gly of ATG8. Also interacts with the 40 amino acid C-terminal region of the E1-like ATG7 enzyme. Also interacts with the ATG12-ATG5 conjugate. Interacts with HAT1. Acetylated by HAT1 at Lys-262 and Lys-267, which affects the interaction with ATG8 and prevents autophagy during both appressorium development and nutrient starvation.

The protein resides in the preautophagosomal structure. The protein localises to the cytoplasm. In terms of biological role, E2 conjugating enzyme required for the cytoplasm to vacuole transport (Cvt) and autophagy. Required for selective autophagic degradation of the nucleus (nucleophagy) as well as for mitophagy which contributes to regulate mitochondrial quantity and quality by eliminating the mitochondria to a basal level to fulfill cellular energy requirements and preventing excess ROS production. Responsible for the E2-like covalent binding of phosphatidylethanolamine to the C-terminal Gly of ATG8. The ATG12-ATG5 conjugate plays a role of an E3 and promotes the transfer of ATG8 from ATG3 to phosphatidylethanolamine (PE). This step is required for the membrane association of ATG8. The formation of the ATG8-phosphatidylethanolamine conjugate is essential for autophagy and for the cytoplasm to vacuole transport (Cvt). The ATG8-PE conjugate mediates tethering between adjacent membranes and stimulates membrane hemifusion, leading to expansion of the autophagosomal membrane during autophagy. Plays a role in appressorium formation and pathogenicity. The protein is Autophagy-related protein 3 of Pyricularia oryzae (strain 70-15 / ATCC MYA-4617 / FGSC 8958) (Rice blast fungus).